Consider the following 597-residue polypeptide: Nuclear factor erythroid 2-related factor 2 (597 aa).

Positions Asp29 to Gly31 match the DLG motif motif. Position 40 is a phosphoserine; by PKC (Ser40). The ETGE motif signature appears at Glu79 to Glu82. Ser207 bears the Phosphoserine mark. Positions Thr327–Ser440 are disordered. Positions Ser333–Arg345 are enriched in polar residues. N-linked (Glc) (glycation) lysine glycans are attached at residues Lys454, Lys464, and Lys479. The 64-residue stretch at Leu489–Leu552 folds into the bZIP domain. A glycan (N-linked (Glc) (glycation) arginine) is linked at Arg491. The basic motif stretch occupies residues Arg491–Lys510. A leucine-zipper region spans residues Ile514–Leu521. Arg561 carries an N-linked (Glc) (glycation) arginine glycan. The tract at residues Glu563–Asn597 is disordered. N-linked (Glc) (glycation) lysine glycosylation is present at Lys566. Residues Ser571–Asp580 show a composition bias toward polar residues. Positions Val583–Lys588 are mediates interaction with CHD6 and is necessary to activate transcription. Lys588 and Lys591 each carry N6-acetyllysine; by CREBBP.

The protein belongs to the bZIP family. CNC subfamily. As to quaternary structure, heterodimer; heterodimerizes with small Maf proteins. Interacts (via the bZIP domain) with MAFG and MAFK; required for binding to antioxidant response elements (AREs) on DNA. Interacts with KEAP1; the interaction is direct and promotes ubiquitination by the BCR(KEAP1) E3 ubiquitin ligase complex. Forms a ternary complex with PGAM5 and KEAP1. Interacts with EEF1D at heat shock promoter elements (HSE). Interacts via its leucine-zipper domain with the coiled-coil domain of PMF1. Interacts with CHD6; involved in activation of the transcription. Interacts with ESRRB; represses NFE2L2 transcriptional activity. Interacts with MOTS-c, a peptide produced by the mitochondrially encoded 12S rRNA MT-RNR1; the interaction occurs in the nucleus following metabolic stress. Ubiquitinated in the cytoplasm by the BCR(KEAP1) E3 ubiquitin ligase complex leading to its degradation. In response to oxidative stress, electrophile metabolites, such as sulforaphane, modify KEAP1, leading to inhibit activity of the BCR(KEAP1) complex, promoting NFE2L2/NRF2 nuclear accumulation and activity. In response to autophagy, the BCR(KEAP1) complex is inactivated. Post-translationally, phosphorylated by EIF2AK3/PERK following unfolded protein response (UPR), promoting dissociation from its cytoplasmic inhibitor KEAP1, followed by its translocation into the nucleus. Phosphorylation of Ser-40 by PKC in response to oxidative stress dissociates NFE2L2 from its cytoplasmic inhibitor KEAP1, promoting its translocation into the nucleus. In terms of processing, acetylation at Lys-588 and Lys-591 increases nuclear localization whereas deacetylation by SIRT1 enhances cytoplasmic presence. Glycation impairs transcription factor activity by preventing heterodimerization with small Maf proteins. Deglycation by FN3K restores activity. As to expression, widely expressed. Highest expression in liver, skeletal muscle, luminal cells of the stomach and intestine, lining of the bronchi and alveoli, and in renal tubules; followed by heart, spleen, testis and brain.

The protein resides in the cytoplasm. The protein localises to the cytosol. Its subcellular location is the nucleus. Functionally, transcription factor that plays a key role in the response to oxidative stress: binds to antioxidant response (ARE) elements present in the promoter region of many cytoprotective genes, such as phase 2 detoxifying enzymes, and promotes their expression, thereby neutralizing reactive electrophiles. In normal conditions, ubiquitinated and degraded in the cytoplasm by the BCR(KEAP1) complex. In response to oxidative stress, electrophile metabolites inhibit activity of the BCR(KEAP1) complex, promoting nuclear accumulation of NFE2L2/NRF2, heterodimerization with one of the small Maf proteins and binding to ARE elements of cytoprotective target genes. The NFE2L2/NRF2 pathway is also activated in response to selective autophagy: autophagy promotes interaction between KEAP1 and SQSTM1/p62 and subsequent inactivation of the BCR(KEAP1) complex, leading to NFE2L2/NRF2 nuclear accumulation and expression of cytoprotective genes. The NFE2L2/NRF2 pathway is also activated during the unfolded protein response (UPR), contributing to redox homeostasis and cell survival following endoplasmic reticulum stress. May also be involved in the transcriptional activation of genes of the beta-globin cluster by mediating enhancer activity of hypersensitive site 2 of the beta-globin locus control region. Also plays an important role in the regulation of the innate immune response. It is a critical regulator of the innate immune response and survival during sepsis by maintaining redox homeostasis and restraint of the dysregulation of pro-inflammatory signaling pathways like MyD88-dependent and -independent and TNF-alpha signaling. Suppresses macrophage inflammatory response by blocking pro-inflammatory cytokine transcription and the induction of IL6. Binds to the proximity of pro-inflammatory genes in macrophages and inhibits RNA Pol II recruitment. The inhibition is independent of the Nrf2-binding motif and reactive oxygen species level. Represses antiviral cytosolic DNA sensing by suppressing the expression of the adapter protein STING1 and decreasing responsiveness to STING1 agonists while increasing susceptibility to infection with DNA viruses. This Mus musculus (Mouse) protein is Nuclear factor erythroid 2-related factor 2.